A 180-amino-acid chain; its full sequence is ADP-ribosylation factor 1 (180 aa).

The N-myristoyl glycine moiety is linked to residue Gly2. GTP contacts are provided by residues 24-31 (GLDAAGKT), 67-71 (DVGGQ), and 126-129 (NKQD).

Belongs to the small GTPase superfamily. Arf family.

The protein localises to the golgi apparatus. It carries out the reaction GTP + H2O = GDP + phosphate + H(+). In terms of biological role, GTP-binding protein involved in protein trafficking; may modulate vesicle budding and uncoating within the Golgi apparatus. The chain is ADP-ribosylation factor 1 (arf1) from Schizosaccharomyces pombe (strain 972 / ATCC 24843) (Fission yeast).